The following is a 278-amino-acid chain: MDEQQWTGQLDLTVFFDGNRSVSRDIFFEKALKVIRPVYLNQSTIPTFYIVNVGGGYLDGDRYRMNVNVEDNAKVTLTSQGATKIYKTPSNHVEQYQTFNLKDNAYLEYVADPIIAYENAKFYQHNTFNLNNSSSLFYTDILTPGYSKTGEAFKYQYMHLINEIYIEDELVTYDNLLLNPNKQSINEIGYMEHYSHYGSAYFIHEDVNQKLIDSVYETISSYSNTFDCRVAISQLPTHGFAVRIFAYRTQIIEKILGTIQSYIAENIYDRKLDFLRKY.

Belongs to the UreD family. In terms of assembly, ureD, UreF and UreG form a complex that acts as a GTP-hydrolysis-dependent molecular chaperone, activating the urease apoprotein by helping to assemble the nickel containing metallocenter of UreC. The UreE protein probably delivers the nickel.

Its subcellular location is the cytoplasm. Its function is as follows. Required for maturation of urease via the functional incorporation of the urease nickel metallocenter. This is Urease accessory protein UreD from Staphylococcus aureus (strain JH1).